A 536-amino-acid chain; its full sequence is Protein ST7 homolog (536 aa).

The next 2 helical transmembrane spans lie at Cys3 to Leu23 and Phe49 to Trp69. Positions Ala192 to Thr219 form a coiled coil. The helical transmembrane segment at Ser464–Leu484 threads the bilayer.

It belongs to the ST7 family.

The protein resides in the membrane. The polypeptide is Protein ST7 homolog (Caenorhabditis briggsae).